The chain runs to 98 residues: uncharacterized protein (98 aa).

The span at 1–21 shows a compositional bias: low complexity; sequence MTTSPTTISTTTAATTTTTTP. A disordered region spans residues 1–26; it reads MTTSPTTISTTTAATTTTTTPGKGTD. Residues 29 to 49 form a helical membrane-spanning segment; that stretch reads MVYIEAMLFSMLVLILLIIVC.

It localises to the host membrane. This is an uncharacterized protein from Equine herpesvirus 2 (strain 86/87) (EHV-2).